The chain runs to 315 residues: MTQLDALKQFTTVVADTGDFRQLAQFKPQDATTNPSLILKAVQKADYAPLMRDTVGRFKGRALDEVMDRLLVRFGCEILSIIPGRVSTEVDARLSFDTSATVTRGERLIELYQAEGIHIDRVLIKVAATWEGIEAARELEQRGIHTNLTLLFSFCQAVACGQARVQLISPFVGRIYDWYKKSAGSGWNEAANADANDPGVKSVREIYNHYKHFGIATEVMGASFRNIGQITALAGCDLLTISPELLAQLAASDAPLARALDADSAAALDLPAKSFDETGFRYALNEDAMATEKLAEGIRAFAADAVKLEQLLLAA.

The active-site Schiff-base intermediate with substrate is Lys125.

It belongs to the transaldolase family. Type 1 subfamily. In terms of assembly, homodimer.

It is found in the cytoplasm. It carries out the reaction D-sedoheptulose 7-phosphate + D-glyceraldehyde 3-phosphate = D-erythrose 4-phosphate + beta-D-fructose 6-phosphate. Its pathway is carbohydrate degradation; pentose phosphate pathway; D-glyceraldehyde 3-phosphate and beta-D-fructose 6-phosphate from D-ribose 5-phosphate and D-xylulose 5-phosphate (non-oxidative stage): step 2/3. In terms of biological role, transaldolase is important for the balance of metabolites in the pentose-phosphate pathway. The protein is Transaldolase of Polaromonas naphthalenivorans (strain CJ2).